Consider the following 225-residue polypeptide: PKHD-type hydroxylase YbiX (225 aa).

The 100-residue stretch at 78–177 (TLSTPLFNRY…RVASFMWIQS (100 aa)) folds into the Fe2OG dioxygenase domain. The Fe cation site is built by His-96, Asp-98, and His-158. Arg-168 provides a ligand contact to 2-oxoglutarate.

The cofactor is Fe(2+). Requires L-ascorbate as cofactor.

The polypeptide is PKHD-type hydroxylase YbiX (Escherichia coli (strain K12 / DH10B)).